The chain runs to 220 residues: Riboflavin kinase (220 aa).

An H-T-H motif-like region spans residues 1-92 (METDDQYYRA…LSRILAIKNN (92 aa)). Residues 93–220 (VVITGTVTSG…GDRVSVEVYT (128 aa)) form a riboflavin kinase region. 102–107 (GMGEGR) contacts CDP. Residues Thr-131 and Asn-133 each coordinate Mg(2+). 2 residues coordinate FMN: Thr-188 and Glu-195. 200–203 (KYLR) serves as a coordination point for CDP.

The protein belongs to the archaeal riboflavin kinase family. Mg(2+) is required as a cofactor.

The catalysed reaction is riboflavin + CTP = CDP + FMN + H(+). It functions in the pathway cofactor biosynthesis; FMN biosynthesis; FMN from riboflavin (CTP route): step 1/1. Its function is as follows. Catalyzes the CTP-dependent phosphorylation of riboflavin (vitamin B2) to form flavin mononucleotide (FMN). The polypeptide is Riboflavin kinase (ribK) (Thermoplasma acidophilum (strain ATCC 25905 / DSM 1728 / JCM 9062 / NBRC 15155 / AMRC-C165)).